Consider the following 463-residue polypeptide: Perilipin-5 (463 aa).

The interaction with LIPE stretch occupies residues Met1–Gln108. Positions Met1 to Leu173 are essential for lipid droplet targeting. Residues Ser2, Ser148, and Ser322 each carry the phosphoserine modification. The interval Val185–Phe463 is interaction with PNPLA2 and ABHD5. Residues Gln444 to Phe463 are recruits mitochondria at the lipid droplet surface.

It belongs to the perilipin family. As to quaternary structure, homooligomer. Interacts with PNPLA2; prevents interaction of PNPLA2 with ABHD5. Interacts with ABHD5; targets ABHD5 to lipid droplets and promotes interaction of ABHD5 with PNPLA2. Interacts with LIPE. Phosphorylated by PKA. Phosphorylated on serine in skeletal muscle at rest or upon lipolytic stimulation. As to expression, expressed in skeletal muscle, liver, heart and kidney.

It is found in the lipid droplet. Its subcellular location is the cytoplasm. The protein localises to the mitochondrion. Lipid droplet-associated protein that maintains the balance between lipogenesis and lipolysis and also regulates fatty acid oxidation in oxidative tissues. Recruits mitochondria to the surface of lipid droplets and is involved in lipid droplet homeostasis by regulating both the storage of fatty acids in the form of triglycerides and the release of fatty acids for mitochondrial fatty acid oxidation. In lipid droplet triacylglycerol hydrolysis, plays a role as a scaffolding protein for three major key lipolytic players: ABHD5, PNPLA2 and LIPE. Reduces the triacylglycerol hydrolase activity of PNPLA2 by recruiting and sequestering PNPLA2 to lipid droplets. Phosphorylation by PKA enables lipolysis probably by promoting release of ABHD5 from the perilipin scaffold and by facilitating interaction of ABHD5 with PNPLA2. Also increases lipolysis through interaction with LIPE and upon PKA-mediated phosphorylation of LIPE. This Homo sapiens (Human) protein is Perilipin-5 (PLIN5).